The chain runs to 32 residues: Photosystem II reaction center protein T (32 aa).

A helical membrane pass occupies residues 3–23; the sequence is ALVYVFLLIGTLMIIFFAIFF.

It belongs to the PsbT family. PSII is composed of 1 copy each of membrane proteins PsbA, PsbB, PsbC, PsbD, PsbE, PsbF, PsbH, PsbI, PsbJ, PsbK, PsbL, PsbM, PsbT, PsbY, PsbZ, Psb30/Ycf12, at least 3 peripheral proteins of the oxygen-evolving complex and a large number of cofactors. It forms dimeric complexes.

Its subcellular location is the plastid. It is found in the chloroplast thylakoid membrane. Functionally, found at the monomer-monomer interface of the photosystem II (PS II) dimer, plays a role in assembly and dimerization of PSII. PSII is a light-driven water plastoquinone oxidoreductase, using light energy to abstract electrons from H(2)O, generating a proton gradient subsequently used for ATP formation. This is Photosystem II reaction center protein T from Cyanidioschyzon merolae (strain NIES-3377 / 10D) (Unicellular red alga).